The primary structure comprises 492 residues: Beclin 1-associated autophagy-related key regulator (492 aa).

At Ser-29 the chain carries Phosphoserine. A coiled-coil region spans residues 70–180 (RDRERFIDKK…KLGDLVEKKT (111 aa)). Disordered stretches follow at residues 213 to 232 (TSGRDPADVSSETDSAMTSS) and 411 to 473 (GVAG…AGGM). The segment covering 222 to 232 (SSETDSAMTSS) has biased composition (polar residues). Residue Ser-416 is modified to Phosphoserine. Acidic residues predominate over residues 424–433 (VSDEETDLGT). Thr-429 is subject to Phosphothreonine. A compositionally biased stretch (low complexity) spans 447 to 473 (PSQPVEVSQSQSTQASPPIASSSAGGM).

Belongs to the ATG14 family. In terms of assembly, forms homooligomers; homo-oligomerization is essential for the roles in membrane tethering and enhancement of SNARE-mediated fusion. Component of the PI3K (PI3KC3/PI3K-III/class III phosphatidylinositol 3-kinase) complex I (PI3KC3-C1) in which the core composed of the catalytic subunit PIK3C3, the regulatory subunit PIK3R4 and BECN1 is associated with ATG14. PI3KC3-C1 displays a V-shaped architecture with PIK3R4 serving as a bridge between PIK3C3 and the ATG14:BECN1 subcomplex. PI3KC3-C1 can associate with further regulatory subunits. Interacts with PIK3CB. Interacts (via coiled-coil domain) with BECN2 (via coiled-coil domain); this interaction is tighter than BECN2 self-association. Interacts with the STX17-SNAP29 binary t-SNARE complex. Interacts with NRBF2. Interacts with PIK3C3 and BECN1; this interaction is increased in the absence of TMEM39A. Interacts with STEEP1; the interaction is required for trafficking of STING1 from the endoplasmic reticulum. Interacts with ARMC3 (via ARM domains). Post-translationally, ubiquitinated via 'Lys-6', 'Lys-11' and 'Lys-63'-linked polyubiquitin chains on multiple lysines by MARCHF7, leading to ATG14 aggregation and loss of interaction with STX17.

It localises to the cytoplasm. Its subcellular location is the endoplasmic reticulum membrane. The protein resides in the preautophagosomal structure membrane. Its function is as follows. Required for both basal and inducible autophagy. Determines the localization of the autophagy-specific PI3-kinase complex. Plays a role in autophagosome formation and MAP1LC3/LC3 conjugation to phosphatidylethanolamine. Promotes BECN1 translocation from the trans-Golgi network to autophagosomes. Enhances PIK3C3 activity in a BECN1-dependent manner. Essential for the autophagy-dependent phosphorylation of BECN1. Stimulates the phosphorylation of BECN1, but suppresses the phosphorylation PIK3C3 by AMPK. Binds to STX17-SNAP29 binary t-SNARE complex on autophagosomes and primes it for VAMP8 interaction to promote autophagosome-endolysosome fusion. Modulates the hepatic lipid metabolism. This chain is Beclin 1-associated autophagy-related key regulator, found in Rattus norvegicus (Rat).